A 569-amino-acid polypeptide reads, in one-letter code: Laccase-6 (569 aa).

The signal sequence occupies residues 1 to 29; the sequence is MTSSAVPSLFRLSFLLFTLQVMNIGRIGA. 2 Plastocyanin-like domains span residues 37 to 153 and 163 to 315; these read KVQT…PKAS and NEHT…YIGA. An N-linked (GlcNAc...) asparagine glycan is attached at Asn-83. Residues His-87, His-89, His-132, and His-134 each contribute to the Cu cation site. N-linked (GlcNAc...) asparagine glycosylation is found at Asn-208, Asn-303, Asn-319, Asn-392, Asn-438, and Asn-444. Positions 417 to 553 constitute a Plastocyanin-like 3 domain; sequence DFPTTPEKAY…STMFIVKNGK (137 aa). Cu cation-binding residues include His-472, His-475, His-477, His-532, Cys-533, His-534, His-538, and Met-543.

Belongs to the multicopper oxidase family. Requires Cu cation as cofactor. As to expression, predominantly expressed in the inflorescence stem, but not in siliques.

It is found in the secreted. The protein resides in the extracellular space. The protein localises to the apoplast. The catalysed reaction is 4 hydroquinone + O2 = 4 benzosemiquinone + 2 H2O. Lignin degradation and detoxification of lignin-derived products. The chain is Laccase-6 (LAC6) from Arabidopsis thaliana (Mouse-ear cress).